A 92-amino-acid polypeptide reads, in one-letter code: Small ribosomal subunit protein uS19 (92 aa).

This sequence belongs to the universal ribosomal protein uS19 family.

Its function is as follows. Protein S19 forms a complex with S13 that binds strongly to the 16S ribosomal RNA. This is Small ribosomal subunit protein uS19 from Rickettsia canadensis (strain McKiel).